Reading from the N-terminus, the 176-residue chain is CASP-like protein 5A1 (176 aa).

Residues 1 to 35 (MNPSHPAVHPVEAPPTDVHHAPRVRMKDYQGMPGT) are Cytoplasmic-facing. Residues 36–56 (LGGLALRLGQFCFAVVAFSIM) form a helical membrane-spanning segment. Over 57–67 (LSTDDFSTVTA) the chain is Extracellular. Residues 68 to 88 (FCYLVAATVLQCLWSLALAVI) traverse the membrane as a helical segment. Residues 89 to 102 (DGYALLVKRSLRNS) are Cytoplasmic-facing. Residues 103–123 (LVVSLFVVGDGVTATLTFAAA) form a helical membrane-spanning segment. Topologically, residues 124 to 152 (CASAGITVLIGNDLRECDQNHCGKYETAT) are extracellular. A helical membrane pass occupies residues 153-173 (AMAFLSWFMVSPSFLLTFWLL). Residues 174 to 176 (ASR) lie on the Cytoplasmic side of the membrane.

This sequence belongs to the Casparian strip membrane proteins (CASP) family. In terms of assembly, homodimer and heterodimers.

The protein resides in the cell membrane. This is CASP-like protein 5A1 from Ginkgo biloba (Ginkgo).